Reading from the N-terminus, the 288-residue chain is UDP-3-O-acyl-N-acetylglucosamine deacetylase (288 aa).

Zn(2+)-binding residues include H79, H236, and D240. The active-site Proton donor is H263.

Belongs to the LpxC family. It depends on Zn(2+) as a cofactor.

It carries out the reaction a UDP-3-O-[(3R)-3-hydroxyacyl]-N-acetyl-alpha-D-glucosamine + H2O = a UDP-3-O-[(3R)-3-hydroxyacyl]-alpha-D-glucosamine + acetate. It participates in glycolipid biosynthesis; lipid IV(A) biosynthesis; lipid IV(A) from (3R)-3-hydroxytetradecanoyl-[acyl-carrier-protein] and UDP-N-acetyl-alpha-D-glucosamine: step 2/6. Catalyzes the hydrolysis of UDP-3-O-myristoyl-N-acetylglucosamine to form UDP-3-O-myristoylglucosamine and acetate, the committed step in lipid A biosynthesis. This is UDP-3-O-acyl-N-acetylglucosamine deacetylase from Rickettsia conorii (strain ATCC VR-613 / Malish 7).